A 396-amino-acid polypeptide reads, in one-letter code: Succinyl-CoA:mesaconate CoA-transferase (396 aa).

The active-site Nucleophile is the Asp-175.

The protein belongs to the CoA-transferase III family. As to quaternary structure, homodimer.

The enzyme catalyses mesaconate + succinyl-CoA = 2-methylfumaryl-CoA + succinate. Its activity is regulated as follows. Shows highest activity at 4 M KCl. Does not require divalent ions for activity. Its function is as follows. Involved in the methylaspartate cycle. Catalyzes the transfer of the CoA moiety from succinyl-CoA to mesaconate to generate mesaconyl-CoA (2-methylfumaryl-CoA) and succinate. Also shows high activity with methylsuccinate as CoA-acceptor, and only low activity with glutarate, acrylate and itaconate. Cannot use other CoA donors like acetyl-CoA, propionyl-CoA, butyryl-CoA or acetoacetyl-CoA. The sequence is that of Succinyl-CoA:mesaconate CoA-transferase from Haloarcula hispanica (strain ATCC 33960 / DSM 4426 / JCM 8911 / NBRC 102182 / NCIMB 2187 / VKM B-1755).